Reading from the N-terminus, the 314-residue chain is Ribosomal RNA small subunit methyltransferase H (314 aa).

S-adenosyl-L-methionine is bound by residues 34-36, Asp54, Phe83, Asp104, and Gln111; that span reads GGH.

This sequence belongs to the methyltransferase superfamily. RsmH family.

The protein localises to the cytoplasm. The catalysed reaction is cytidine(1402) in 16S rRNA + S-adenosyl-L-methionine = N(4)-methylcytidine(1402) in 16S rRNA + S-adenosyl-L-homocysteine + H(+). Specifically methylates the N4 position of cytidine in position 1402 (C1402) of 16S rRNA. The sequence is that of Ribosomal RNA small subunit methyltransferase H from Ligilactobacillus salivarius (strain UCC118) (Lactobacillus salivarius).